The following is a 159-amino-acid chain: 6,7-dimethyl-8-ribityllumazine synthase (159 aa).

5-amino-6-(D-ribitylamino)uracil contacts are provided by residues F22, A56–E58, and A80–I82. A85–T86 is a binding site for (2S)-2-hydroxy-3-oxobutyl phosphate. H88 serves as the catalytic Proton donor. 5-amino-6-(D-ribitylamino)uracil is bound at residue F113. R127 serves as a coordination point for (2S)-2-hydroxy-3-oxobutyl phosphate.

Belongs to the DMRL synthase family.

The catalysed reaction is (2S)-2-hydroxy-3-oxobutyl phosphate + 5-amino-6-(D-ribitylamino)uracil = 6,7-dimethyl-8-(1-D-ribityl)lumazine + phosphate + 2 H2O + H(+). Its pathway is cofactor biosynthesis; riboflavin biosynthesis; riboflavin from 2-hydroxy-3-oxobutyl phosphate and 5-amino-6-(D-ribitylamino)uracil: step 1/2. Its function is as follows. Catalyzes the formation of 6,7-dimethyl-8-ribityllumazine by condensation of 5-amino-6-(D-ribitylamino)uracil with 3,4-dihydroxy-2-butanone 4-phosphate. This is the penultimate step in the biosynthesis of riboflavin. In Lactiplantibacillus plantarum (strain ATCC BAA-793 / NCIMB 8826 / WCFS1) (Lactobacillus plantarum), this protein is 6,7-dimethyl-8-ribityllumazine synthase.